The following is a 755-amino-acid chain: Polyribonucleotide nucleotidyltransferase (755 aa).

Mg(2+)-binding residues include Asp-545 and Asp-551. One can recognise a KH domain in the interval 611–670 (PRITAITVPVNKIGEVIGPKGKTINSITEETGANISIEEDGTVYVSAASGAAAEAAIEKI). The S1 motif domain maps to 682–751 (GERFLGTVVK…NRGKISLAPV (70 aa)).

The protein belongs to the polyribonucleotide nucleotidyltransferase family. Mg(2+) is required as a cofactor.

It localises to the cytoplasm. It carries out the reaction RNA(n+1) + phosphate = RNA(n) + a ribonucleoside 5'-diphosphate. Functionally, involved in mRNA degradation. Catalyzes the phosphorolysis of single-stranded polyribonucleotides processively in the 3'- to 5'-direction. In Corynebacterium diphtheriae (strain ATCC 700971 / NCTC 13129 / Biotype gravis), this protein is Polyribonucleotide nucleotidyltransferase.